The chain runs to 99 residues: Plastocyanin (99 aa).

The Plastocyanin-like domain occupies Ala-1–Asn-99. 4 residues coordinate Cu cation: His-37, Cys-84, His-87, and Met-92.

It belongs to the plastocyanin family. The cofactor is Cu(2+).

The protein localises to the plastid. The protein resides in the chloroplast thylakoid membrane. Functionally, participates in electron transfer between P700 and the cytochrome b6-f complex in photosystem I. In Lactuca sativa (Garden lettuce), this protein is Plastocyanin (PETE).